A 335-amino-acid chain; its full sequence is Glycerol-3-phosphate dehydrogenase [NAD(P)+] (335 aa).

4 residues coordinate NADPH: Ser-15, Tyr-16, His-36, and Lys-110. Positions 110, 139, and 141 each coordinate sn-glycerol 3-phosphate. Position 143 (Ala-143) interacts with NADPH. The sn-glycerol 3-phosphate site is built by Lys-195, Asp-248, Ser-258, Arg-259, and Asn-260. The active-site Proton acceptor is the Lys-195. Arg-259 serves as a coordination point for NADPH. Residues Val-283 and Glu-285 each coordinate NADPH.

Belongs to the NAD-dependent glycerol-3-phosphate dehydrogenase family.

It localises to the cytoplasm. It catalyses the reaction sn-glycerol 3-phosphate + NAD(+) = dihydroxyacetone phosphate + NADH + H(+). The catalysed reaction is sn-glycerol 3-phosphate + NADP(+) = dihydroxyacetone phosphate + NADPH + H(+). Its pathway is membrane lipid metabolism; glycerophospholipid metabolism. Its function is as follows. Catalyzes the reduction of the glycolytic intermediate dihydroxyacetone phosphate (DHAP) to sn-glycerol 3-phosphate (G3P), the key precursor for phospholipid synthesis. This is Glycerol-3-phosphate dehydrogenase [NAD(P)+] from Haemophilus influenzae (strain ATCC 51907 / DSM 11121 / KW20 / Rd).